The primary structure comprises 438 residues: Phosphoribosylamine--glycine ligase (438 aa).

One can recognise an ATP-grasp domain in the interval Arg-108 to Lys-316. An ATP-binding site is contributed by Ile-135–Thr-194. Mg(2+) contacts are provided by Gln-274, Glu-286, and Asn-288. Residues Gln-274, Glu-286, and Asn-288 each contribute to the Mn(2+) site.

This sequence belongs to the GARS family. The cofactor is Mg(2+). It depends on Mn(2+) as a cofactor.

The enzyme catalyses 5-phospho-beta-D-ribosylamine + glycine + ATP = N(1)-(5-phospho-beta-D-ribosyl)glycinamide + ADP + phosphate + H(+). Its pathway is purine metabolism; IMP biosynthesis via de novo pathway; N(1)-(5-phospho-D-ribosyl)glycinamide from 5-phospho-alpha-D-ribose 1-diphosphate: step 2/2. This chain is Phosphoribosylamine--glycine ligase, found in Pyrococcus abyssi (strain GE5 / Orsay).